The chain runs to 500 residues: Probable cytosol aminopeptidase (500 aa).

Mn(2+) is bound by residues Lys265 and Asp270. Lys277 is an active-site residue. Positions 288, 347, and 349 each coordinate Mn(2+). Residue Arg351 is part of the active site.

It belongs to the peptidase M17 family. The cofactor is Mn(2+).

It is found in the cytoplasm. The catalysed reaction is Release of an N-terminal amino acid, Xaa-|-Yaa-, in which Xaa is preferably Leu, but may be other amino acids including Pro although not Arg or Lys, and Yaa may be Pro. Amino acid amides and methyl esters are also readily hydrolyzed, but rates on arylamides are exceedingly low.. The enzyme catalyses Release of an N-terminal amino acid, preferentially leucine, but not glutamic or aspartic acids.. Presumably involved in the processing and regular turnover of intracellular proteins. Catalyzes the removal of unsubstituted N-terminal amino acids from various peptides. The protein is Probable cytosol aminopeptidase of Rickettsia typhi (strain ATCC VR-144 / Wilmington).